The sequence spans 354 residues: Phospho-N-acetylmuramoyl-pentapeptide-transferase (354 aa).

Transmembrane regions (helical) follow at residues 23-43 (FSFF…IAWA), 66-86 (TPTM…LLCA), 88-108 (LDNV…ALGF), 130-150 (LAVQ…HGEL), 161-181 (FALL…IVAA), 193-213 (GLAS…AYIC), 230-250 (VGET…FLWF), 257-277 (VFMG…MGVM), 282-302 (ILLI…ILQV), and 331-351 (KIIV…LTAL).

This sequence belongs to the glycosyltransferase 4 family. MraY subfamily. Requires Mg(2+) as cofactor.

Its subcellular location is the cell inner membrane. The catalysed reaction is UDP-N-acetyl-alpha-D-muramoyl-L-alanyl-gamma-D-glutamyl-meso-2,6-diaminopimeloyl-D-alanyl-D-alanine + di-trans,octa-cis-undecaprenyl phosphate = di-trans,octa-cis-undecaprenyl diphospho-N-acetyl-alpha-D-muramoyl-L-alanyl-D-glutamyl-meso-2,6-diaminopimeloyl-D-alanyl-D-alanine + UMP. It participates in cell wall biogenesis; peptidoglycan biosynthesis. Catalyzes the initial step of the lipid cycle reactions in the biosynthesis of the cell wall peptidoglycan: transfers peptidoglycan precursor phospho-MurNAc-pentapeptide from UDP-MurNAc-pentapeptide onto the lipid carrier undecaprenyl phosphate, yielding undecaprenyl-pyrophosphoryl-MurNAc-pentapeptide, known as lipid I. This chain is Phospho-N-acetylmuramoyl-pentapeptide-transferase, found in Campylobacter curvus (strain 525.92).